We begin with the raw amino-acid sequence, 1144 residues long: Adenylate cyclase type 3 (1144 aa).

Residues Met1 to Leu79 lie on the Cytoplasmic side of the membrane. 5 helical membrane passes run Val80–Phe100, Leu105–Cys125, Val139–Phe159, Ala173–Ile193, and Ile226–Met246. 3 residues coordinate Mg(2+): Asp324, Ile325, and Asp368. Residues Asp324–Thr329 and Leu366–Asp368 each bind ATP. The helical transmembrane segment at Glu381–Val401 threads the bilayer. At Arg402–Ser630 the chain is on the cytoplasmic side. Arg412 is an ATP binding site. Lys465 is covalently cross-linked (Glycyl lysine isopeptide (Lys-Gly) (interchain with G-Cter in SUMO3)). The disordered stretch occupies residues Gln504–Arg563. Residue Ser523 is modified to Phosphoserine. Over residues Gly534–Ser543 the composition is skewed to low complexity. Ser578 carries the phosphoserine modification. 3 consecutive transmembrane segments (helical) span residues Gly631–Ile651, Phe662–Pro682, and Trp706–Leu726. N-linked (GlcNAc...) asparagine glycosylation is present at Asn734. The next 3 helical transmembrane spans lie at Val755–Leu775, Leu777–Phe797, and Leu833–Phe853. The Cytoplasmic portion of the chain corresponds to Tyr854–Pro1144. Residues Lys975, Asp1062–Trp1064, and Asn1069–Arg1073 contribute to the ATP site. Ser1076 is subject to Phosphoserine; by CaMK2. Residue Lys1109 coordinates ATP.

The protein belongs to the adenylyl cyclase class-4/guanylyl cyclase family. It depends on Mg(2+) as a cofactor. Requires Mn(2+) as cofactor. N-glycosylated. In terms of processing, sumoylated. Sumoylation is required for targeting ot olfactory cilia. Post-translationally, rapidly phosphorylated after stimulation by odorants or forskolin. Phosphorylation by CaMK2 at Ser-1076 down-regulates enzyme activity. In terms of tissue distribution, detected on cilia on the olfactory epithelium (at protein level). Detected on cilia on the olfactory epithelium.

The protein resides in the cell membrane. It is found in the golgi apparatus. The protein localises to the cell projection. It localises to the cilium. Its subcellular location is the cytoplasm. It catalyses the reaction ATP = 3',5'-cyclic AMP + diphosphate. Specifically activated by the G alpha protein GNAL/G(olf) in signaling cascades triggered by odorant receptors. Activated by forskolin. After forskolin treatment, activity is further increased by calcium/calmodulin. In the absence of forskolin, calcium/calmodulin has little effect on enzyme activity. In terms of biological role, catalyzes the formation of the signaling molecule cAMP in response to G-protein signaling. Participates in signaling cascades triggered by odorant receptors via its function in cAMP biosynthesis: specifically activated by G alpha protein GNAL/G(olf) in olfactory epithelium. Required for the perception of odorants. Required for normal sperm motility and normal male fertility. Plays a role in regulating insulin levels and body fat accumulation in response to a high fat diet. The sequence is that of Adenylate cyclase type 3 from Rattus norvegicus (Rat).